We begin with the raw amino-acid sequence, 299 residues long: UDP-N-acetylenolpyruvoylglucosamine reductase (299 aa).

The 169-residue stretch at 21–189 folds into the FAD-binding PCMH-type domain; it reads RVGGPAQWLL…LSARFRLEPG (169 aa). Arg-168 is a catalytic residue. Ser-219 functions as the Proton donor in the catalytic mechanism. Glu-289 is a catalytic residue.

It belongs to the MurB family. FAD is required as a cofactor.

It localises to the cytoplasm. The enzyme catalyses UDP-N-acetyl-alpha-D-muramate + NADP(+) = UDP-N-acetyl-3-O-(1-carboxyvinyl)-alpha-D-glucosamine + NADPH + H(+). The protein operates within cell wall biogenesis; peptidoglycan biosynthesis. Cell wall formation. This is UDP-N-acetylenolpyruvoylglucosamine reductase from Parasynechococcus marenigrum (strain WH8102).